Reading from the N-terminus, the 349-residue chain is N-formyl peptide receptor 3 (349 aa).

At 1-27 (METNFSIPLNETEEVLPEPAGHTVLWI) the chain is on the extracellular side. Asn-4 and Asn-10 each carry an N-linked (GlcNAc...) asparagine glycan. Residues 28 to 50 (FSLLVHGVTFVFGVLGNGLVIWV) traverse the membrane as a helical segment. Residues 51 to 61 (AGFRMTRTVNT) are Cytoplasmic-facing. The chain crosses the membrane as a helical span at residues 62–83 (ICYLNLALADFSFSAILPFRMV). The Extracellular portion of the chain corresponds to 84 to 100 (SVAMREKWPFGSFLCKL). Cys-98 and Cys-176 are oxidised to a cystine. A helical membrane pass occupies residues 101–121 (VHVMIDINLFVSVYLITIIAL). The Cytoplasmic segment spans residues 122–140 (DRCICVLHPAWAQNHRTMS). Residues 141 to 162 (LAKRVMTGLWILTIVLTLPNFI) traverse the membrane as a helical segment. The Extracellular segment spans residues 163 to 205 (FWTTIRTTNGDTYCIFNFAFWGDTAVERLNVFITMAKVFLILH). The chain crosses the membrane as a helical span at residues 206–226 (FIIGFSMPMSIITVCYGIIAA). Residues 227 to 242 (KIHRNHMIKSSRPLRV) are Cytoplasmic-facing. The chain crosses the membrane as a helical span at residues 243 to 266 (FAAVVASFFICWFPYELIGILMAV). The Extracellular portion of the chain corresponds to 267 to 286 (WLKEMLLNGKYKIILVLINP). The chain crosses the membrane as a helical span at residues 287 to 306 (TSSLAFFNSCLNPILYVFMG). Topologically, residues 307-349 (RNFQERLIRSLPTSLERALTEVPDSAQTSNTHTTSASPPEETE) are cytoplasmic. Positions 327–349 (EVPDSAQTSNTHTTSASPPEETE) are disordered. The span at 331-343 (SAQTSNTHTTSAS) shows a compositional bias: polar residues.

Belongs to the G-protein coupled receptor 1 family.

It localises to the cell membrane. In terms of biological role, low affinity receptor for N-formyl-methionyl peptides, which are powerful neutrophils chemotactic factors. Binding of FMLP to the receptor causes activation of neutrophils. This response is mediated via a G-protein that activates a phosphatidylinositol-calcium second messenger system. The polypeptide is N-formyl peptide receptor 3 (FPR3) (Pan troglodytes (Chimpanzee)).